The following is a 338-amino-acid chain: Malate dehydrogenase, mitochondrial (338 aa).

The transit peptide at 1–24 (MLSALARPASAALRRSFSTSAQNN) directs the protein to the mitochondrion. Residues 31–37 (GASGGIG) and Asp57 contribute to the NAD(+) site. Ser33 is a glycosylation site (O-linked (GlcNAc) serine). An N6-acetyllysine; alternate mark is found at Lys78 and Lys91. N6-succinyllysine; alternate is present on residues Lys78 and Lys91. The substrate site is built by Arg104 and Arg110. NAD(+) is bound by residues Asn117 and 140–142 (IAN). Asn142 lines the substrate pocket. Position 165 is an N6-acetyllysine (Lys165). Arg176 serves as a coordination point for substrate. At Lys185 the chain carries N6-acetyllysine; alternate. Lys185 carries the post-translational modification N6-succinyllysine; alternate. His200 (proton acceptor) is an active-site residue. Lys203 is modified (N6-succinyllysine). An N6-acetyllysine; alternate mark is found at Lys215 and Lys239. Residues Lys215 and Lys239 each carry the N6-succinyllysine; alternate modification. Lys239 carries the post-translational modification N6-malonyllysine; alternate. The residue at position 246 (Ser246) is a Phosphoserine. Met251 is a binding site for NAD(+). An N6-succinyllysine modification is found at Lys269. Residues Lys296, Lys301, Lys307, Lys314, and Lys324 each carry the N6-acetyllysine; alternate modification. Lys296, Lys301, Lys307, Lys314, and Lys324 each carry N6-succinyllysine; alternate. The residue at position 307 (Lys307) is an N6-malonyllysine; alternate. At Ser326 the chain carries Phosphoserine. N6-acetyllysine; alternate is present on residues Lys328, Lys329, and Lys335. Lys328 is modified (N6-succinyllysine; alternate). Lys329 carries the N6-malonyllysine; alternate modification. Lys335 is modified (N6-succinyllysine; alternate).

This sequence belongs to the LDH/MDH superfamily. MDH type 1 family. As to quaternary structure, homodimer. Post-translationally, acetylation is enhanced by up to 67% after treatment either with trichostin A (TSA) or with nicotinamide (NAM) with the appearance of tri- and tetraacetylations. Glucose also increases acetylation by about 60%.

The protein localises to the mitochondrion matrix. The enzyme catalyses (S)-malate + NAD(+) = oxaloacetate + NADH + H(+). Enzyme activity is enhanced by acetylation. This Homo sapiens (Human) protein is Malate dehydrogenase, mitochondrial (MDH2).